Reading from the N-terminus, the 347-residue chain is MDITVAIDAMGGDHGPHVTIPAALNAIRQDSQLNIILVGVKDVIEAELSANKATVGPRLRIHHATEVVAMDESPQSALKNKKDSSMRVAINLVKSGEATACVSAGNTGALMATARFVLKTLPGIDRPAIAGILPTQKGRVYMLDLGANADCTPEHLLQFAIMGAMLVSCVEHKERPSVGLLNIGSEDIKGNEVVKQAGELLRASRLNFYGNIEGNDIYKGTTDVVVCDGFVGNVALKTSEGLAQMVNRFLVQEFKRSWMTKLMALISMPVLKAFKRRLDPRRYNGATFLGLRGVVVKSHGGADSLAFQYAIQAAAEESRNGVLNRITEQLEIEHLKPQPAAQGVENI.

This sequence belongs to the PlsX family. Homodimer. Probably interacts with PlsY.

It is found in the cytoplasm. The catalysed reaction is a fatty acyl-[ACP] + phosphate = an acyl phosphate + holo-[ACP]. Its pathway is lipid metabolism; phospholipid metabolism. Functionally, catalyzes the reversible formation of acyl-phosphate (acyl-PO(4)) from acyl-[acyl-carrier-protein] (acyl-ACP). This enzyme utilizes acyl-ACP as fatty acyl donor, but not acyl-CoA. In Methylobacillus flagellatus (strain ATCC 51484 / DSM 6875 / VKM B-1610 / KT), this protein is Phosphate acyltransferase.